The sequence spans 165 residues: LIM domain transcription factor LMO4.2 (165 aa).

LIM zinc-binding domains follow at residues 21–83 (KRCA…LFGN) and 85–147 (GACS…ALIN).

Its function is as follows. Acts as a positive cofactor of GATA transcription factors to establish the identity of the ventral mesoderm during gastrulation. Down-regulation in the dorsal mesoderm is necessary for the proper formation of this territory since, when present, lmo4 may bind ldb1 and restrict the availability of this cofactor for Spemman organizer transcription factors. At neurula stages, suppresses primary neuron differentiation and modulates gene expression at the Isthmic Organizer of the midbrain-hindbrain boundary. This is LIM domain transcription factor LMO4.2 (lmo4.2) from Xenopus tropicalis (Western clawed frog).